A 209-amino-acid polypeptide reads, in one-letter code: Guanylate kinase (209 aa).

Residues glycine 16 to leucine 198 form the Guanylate kinase-like domain. Glycine 23–serine 30 contacts ATP.

The protein belongs to the guanylate kinase family.

The protein localises to the cytoplasm. It catalyses the reaction GMP + ATP = GDP + ADP. Functionally, essential for recycling GMP and indirectly, cGMP. This is Guanylate kinase from Rhodopirellula baltica (strain DSM 10527 / NCIMB 13988 / SH1).